The chain runs to 394 residues: Elongation factor Tu 1 (394 aa).

The tr-type G domain occupies 10 to 204 (KPHVNVGTIG…FLDSYIPEPE (195 aa)). Residues 19 to 26 (GHVDHGKT) are G1. 19-26 (GHVDHGKT) contacts GTP. Mg(2+) is bound at residue Thr-26. Residues 60–64 (GITIN) form a G2 region. Positions 81–84 (DCPG) are G3. Residues 81-85 (DCPGH) and 136-139 (NKCD) contribute to the GTP site. Positions 136 to 139 (NKCD) are G4. A G5 region spans residues 174-176 (SAL).

It belongs to the TRAFAC class translation factor GTPase superfamily. Classic translation factor GTPase family. EF-Tu/EF-1A subfamily. Monomer.

The protein localises to the cytoplasm. It carries out the reaction GTP + H2O = GDP + phosphate + H(+). In terms of biological role, GTP hydrolase that promotes the GTP-dependent binding of aminoacyl-tRNA to the A-site of ribosomes during protein biosynthesis. The protein is Elongation factor Tu 1 of Shigella sonnei (strain Ss046).